Here is a 142-residue protein sequence, read N- to C-terminus: MAAGGSDPRAGDVEEDASQLIFPKEFETAETLLNSEVHMLLEHRKQQNESAEDEQELSEVFMKTLNYTARFSRFKNRETIASVRSLLLQKKLHKFELACLANLCPETAEESKALIPSLEGRFEDEELQQILDDIQTKRSFQY.

It belongs to the eukaryotic RPB4 RNA polymerase subunit family. Component of the RNA polymerase II (Pol II) core complex consisting of 12 subunits: a ten-subunit catalytic core composed of POLR2A/RPB1, POLR2B/RPB2, POLR2C/RPB3, POLR2I/RPB9, POLR2J/RPB11, POLR2E/RPABC1, POLR2F/RPABC2, POLR2H/RPABC3, POLR2K/RPABC4 and POLR2L/RPABC5 and a mobile stalk composed of two subunits POLR2D/RPB4 and POLR2G/RPB7, protruding from the core and functioning primarily in transcription initiation. Part of Pol II(G) complex, in which Pol II core associates with an additional subunit POLR2M; unlike conventional Pol II, Pol II(G) functions as a transcriptional repressor. Part of TBP-based Pol II pre-initiation complex (PIC), in which Pol II core assembles with general transcription factors and other specific initiation factors including GTF2E1, GTF2E2, GTF2F1, GTF2F2, TCEA1, ERCC2, ERCC3, GTF2H2, GTF2H3, GTF2H4, GTF2H5, GTF2A1, GTF2A2, GTF2B and TBP; this large multi-subunit PIC complex mediates DNA unwinding and targets Pol II core to the transcription start site where the first phosphodiester bond forms.

It is found in the nucleus. In terms of biological role, core component of RNA polymerase II (Pol II), a DNA-dependent RNA polymerase which synthesizes mRNA precursors and many functional non-coding RNAs using the four ribonucleoside triphosphates as substrates. Pol II is the central component of the basal RNA polymerase II transcription machinery. It is composed of mobile elements that move relative to each other. POLR2D/RPB4 is part of a subcomplex with POLR2G/RPB7 that binds to a pocket formed by POLR2A/RPB1, POLR2B/RPB2 and POLR2F/RPABC2 at the base of the clamp element. The POLR2D/RPB4-POLR2G/RPB7 subcomplex seems to lock the clamp via POLR2G/RPB7 in the closed conformation thus preventing double-stranded DNA to enter the active site cleft. The POLR2D/RPB4-POLR2G/RPB7 subcomplex binds single-stranded DNA and RNA. The polypeptide is DNA-directed RNA polymerase II subunit RPB4 (POLR2D) (Homo sapiens (Human)).